We begin with the raw amino-acid sequence, 440 residues long: Probable aldose 1-epimerase ARB_05372 (440 aa).

Residues 1–24 form the signal peptide; it reads MCGVLRQLMLLLLAFLSITPSCSA. 5 N-linked (GlcNAc...) asparagine glycosylation sites follow: N32, N38, N43, N68, and N112. Position 125 to 126 (125 to 126) interacts with substrate; it reads NR. Residues N129, N147, N163, N171, and N199 are each glycosylated (N-linked (GlcNAc...) asparagine). The Proton donor role is filled by H233. N243, N275, N281, and N306 each carry an N-linked (GlcNAc...) asparagine glycan. D311 provides a ligand contact to substrate. N321, N337, N365, and N385 each carry an N-linked (GlcNAc...) asparagine glycan. The Proton acceptor role is filled by E401.

This sequence belongs to the aldose epimerase family. In terms of assembly, monomer.

It localises to the secreted. The catalysed reaction is alpha-D-glucose = beta-D-glucose. The protein operates within carbohydrate metabolism; hexose metabolism. Its function is as follows. Mutarotase converts alpha-aldose to the beta-anomer. It is active on D-glucose, L-arabinose, D-xylose, D-galactose, maltose and lactose. This chain is Probable aldose 1-epimerase ARB_05372, found in Arthroderma benhamiae (strain ATCC MYA-4681 / CBS 112371) (Trichophyton mentagrophytes).